The primary structure comprises 400 residues: NADH-quinone oxidoreductase subunit D (400 aa).

This sequence belongs to the complex I 49 kDa subunit family. NDH-1 is composed of 14 different subunits. Subunits NuoB, C, D, E, F, and G constitute the peripheral sector of the complex.

The protein resides in the cell inner membrane. It catalyses the reaction a quinone + NADH + 5 H(+)(in) = a quinol + NAD(+) + 4 H(+)(out). In terms of biological role, NDH-1 shuttles electrons from NADH, via FMN and iron-sulfur (Fe-S) centers, to quinones in the respiratory chain. The immediate electron acceptor for the enzyme in this species is believed to be a menaquinone. Couples the redox reaction to proton translocation (for every two electrons transferred, four hydrogen ions are translocated across the cytoplasmic membrane), and thus conserves the redox energy in a proton gradient. In Chlorobium phaeovibrioides (strain DSM 265 / 1930) (Prosthecochloris vibrioformis (strain DSM 265)), this protein is NADH-quinone oxidoreductase subunit D.